The chain runs to 162 residues: SCF ubiquitin ligase complex protein SKP1b (162 aa).

Ser2 carries the post-translational modification N-acetylserine. The interaction with the F-box domain of F-box proteins stretch occupies residues 100–162; sequence ILAANYLDIK…NEWCEDKGGN (63 aa). Pro143 bears the 4-hydroxyproline mark. Pro143 carries an O-linked (GlcNAc...) hydroxyproline glycan.

The protein belongs to the SKP1 family. In terms of assembly, multiprotein complex (SCF) with cullin and F-box-containing protein. Capable of undergoing aggregation. Post-translationally, O-linked glycan consists of linear Gal-Gal-Fuc-Gal-GlcNAc. Not glycosylated in prespore cells. In terms of processing, fpaA and fpaB seem to be identically glycosylated. Glycosylation is required for nuclear enrichment. Post-translationally, hydroxylated by phyA.

It localises to the cytoplasm. The protein resides in the nucleus. This is SCF ubiquitin ligase complex protein SKP1b (fpaB-1) from Dictyostelium discoideum (Social amoeba).